The primary structure comprises 80 residues: Histone H1.M6.1 (80 aa).

Residues 1 to 80 (MSDAAVPPKK…KAVKKAPKKK (80 aa)) are disordered. Residues 11–80 (ASPKKAAAKK…KAVKKAPKKK (70 aa)) are compositionally biased toward basic residues.

It is found in the nucleus. Its subcellular location is the chromosome. The chain is Histone H1.M6.1 from Trypanosoma cruzi.